Here is a 507-residue protein sequence, read N- to C-terminus: Kunitz-type protease inhibitor 1 (507 aa).

The signal sequence occupies residues 1-29 (MAGRRLARASISAVGVWLLCALGLQATEA). Residues 51 to 134 (GVPSFVLDTE…FAPKEGFINY (84 aa)) form the MANSC domain. N-linked (GlcNAc...) asparagine glycosylation occurs at Asn-229. The region spanning 244-294 (CLASYKVGRCRGSFPRWYYDPKEQICKSFTFGGCLGNKNNYLREEECMLAC) is the BPTI/Kunitz inhibitor 1 domain. 8 disulfides stabilise this stretch: Cys-244/Cys-294, Cys-253/Cys-277, Cys-269/Cys-290, Cys-320/Cys-338, Cys-332/Cys-347, Cys-369/Cys-419, Cys-378/Cys-402, and Cys-394/Cys-415. Positions 312-348 (SCHATQFRCSNGCCIDGFLECDDTPDCPDGSDEATCE) constitute an LDL-receptor class A domain. The region spanning 369–419 (CAELPDTGFCKENIPRWYYNPFSERCARFTYGGCYGNKNNFEEEQQCLESC) is the BPTI/Kunitz inhibitor 2 domain. Asn-501 is a glycosylation site (N-linked (GlcNAc...) asparagine).

In terms of assembly, interacts with HGFAC. Interacts with TMPRSS13; the interaction promotes the phosphorylation and cell membrane localization of TMPRSS13.

It localises to the secreted. The protein localises to the cytoplasm. The protein resides in the cell membrane. In terms of biological role, inhibitor of HGFAC. Inhibits serine protease activity of ST14/matriptase in vitro. Inhibits serine protease activity of TMPRSS13, via the BPTI/Kunitz inhibitor 1 domain. This is Kunitz-type protease inhibitor 1 (Spint1) from Mus musculus (Mouse).